An 886-amino-acid polypeptide reads, in one-letter code: DNA double-strand break repair Rad50 ATPase (886 aa).

ATP is bound by residues N32–S38 and Q137. Coiled coils occupy residues I181 to K240 and R320 to N416. In terms of domain architecture, Zinc-hook spans I391–N489. Zn(2+)-binding residues include C437 and C440. Coiled coils occupy residues A450 to L657 and E682 to K718.

This sequence belongs to the SMC family. RAD50 subfamily. As to quaternary structure, homodimer. Forms a heterotetramer composed of two Mre11 subunits and two Rad50 subunits. Interacts with Mre11 and HerA. Zn(2+) serves as cofactor.

In terms of biological role, part of the Rad50/Mre11 complex, which is involved in the early steps of DNA double-strand break (DSB) repair. The complex may facilitate opening of the processed DNA ends to aid in the recruitment of HerA and NurA. Rad50 controls the balance between DNA end bridging and DNA resection via ATP-dependent structural rearrangements of the Rad50/Mre11 complex. The sequence is that of DNA double-strand break repair Rad50 ATPase from Sulfolobus acidocaldarius (strain ATCC 33909 / DSM 639 / JCM 8929 / NBRC 15157 / NCIMB 11770).